Reading from the N-terminus, the 810-residue chain is DNA gyrase subunit A (810 aa).

Residues leucine 36 to leucine 502 form the Topo IIA-type catalytic domain. The O-(5'-phospho-DNA)-tyrosine intermediate role is filled by tyrosine 124. The short motif at glutamine 529–glycine 535 is the GyrA-box element.

The protein belongs to the type II topoisomerase GyrA/ParC subunit family. As to quaternary structure, heterotetramer, composed of two GyrA and two GyrB chains. In the heterotetramer, GyrA contains the active site tyrosine that forms a transient covalent intermediate with DNA, while GyrB binds cofactors and catalyzes ATP hydrolysis.

The protein localises to the cytoplasm. It catalyses the reaction ATP-dependent breakage, passage and rejoining of double-stranded DNA.. A type II topoisomerase that negatively supercoils closed circular double-stranded (ds) DNA in an ATP-dependent manner to modulate DNA topology and maintain chromosomes in an underwound state. Negative supercoiling favors strand separation, and DNA replication, transcription, recombination and repair, all of which involve strand separation. Also able to catalyze the interconversion of other topological isomers of dsDNA rings, including catenanes and knotted rings. Type II topoisomerases break and join 2 DNA strands simultaneously in an ATP-dependent manner. The polypeptide is DNA gyrase subunit A (Borrelia hermsii (strain HS1 / DAH)).